The sequence spans 47 residues: Lysis protein for colicin E5 (47 aa).

The N-terminal stretch at 1-19 (MKKITWIILLLLAAIILAA) is a signal peptide. Residue Cys20 is the site of N-palmitoyl cysteine attachment. Cys20 carries the S-diacylglycerol cysteine lipid modification.

Its subcellular location is the cell outer membrane. Lysis proteins are required for both colicin release and partial cell lysis. The sequence is that of Lysis protein for colicin E5 (lys) from Escherichia coli.